Consider the following 452-residue polypeptide: Putative zinc metalloprotease VC_2253 (452 aa).

His-22 serves as a coordination point for Zn(2+). Residue Glu-23 is part of the active site. His-26 contributes to the Zn(2+) binding site. The helical transmembrane segment at 98–120 threads the bilayer; the sequence is SAIVSAGPIFNFLFAIFAYWLVF. In terms of domain architecture, PDZ spans 197 to 292; the sequence is NLRDWNFDPE…QVELTLIPDS (96 aa). A run of 2 helical transmembrane segments spans residues 378-400 and 428-447; these read FVYF…LVPL and MGYR…AIFN.

The protein belongs to the peptidase M50B family. It depends on Zn(2+) as a cofactor.

Its subcellular location is the cell inner membrane. This is Putative zinc metalloprotease VC_2253 from Vibrio cholerae serotype O1 (strain ATCC 39315 / El Tor Inaba N16961).